The chain runs to 124 residues: Alpha-amylase inhibitor 0.19 (124 aa).

Disulfide bonds link Cys-6-Cys-52, Cys-20-Cys-41, Cys-28-Cys-83, Cys-42-Cys-99, and Cys-54-Cys-115.

Belongs to the protease inhibitor I6 (cereal trypsin/alpha-amylase inhibitor) family. Homodimer. In terms of processing, the disulfide bonds are essential for the inhibitor activity. In terms of tissue distribution, endosperm.

The protein localises to the secreted. Alpha-amylase inhibitor. This chain is Alpha-amylase inhibitor 0.19, found in Triticum aestivum (Wheat).